We begin with the raw amino-acid sequence, 335 residues long: Putative SWIB domain-containing protein R508 (335 aa).

Residues 1 to 12 (MSKRVTSSKKSK) show a composition bias toward basic residues. Positions 1 to 182 (MSKRVTSSKK…NKKSPKKLLN (182 aa)) are disordered. Low complexity predominate over residues 24 to 33 (KNLSKTSKSV). Positions 60–75 (NIGGSKSSRTYNSEGS) are enriched in polar residues. Residues 83–109 (SSKDSKVIKKNKQKVESSDSEKHSENK) are compositionally biased toward basic and acidic residues. Residues 110-126 (SHKKSSKSSSISRKKPI) show a composition bias toward basic residues. The segment covering 163-173 (KGEDNNDEKQN) has biased composition (basic and acidic residues). A coiled-coil region spans residues 181 to 217 (LNEKKISSESFDDKLNELREELRENYIRQKKIMNDIK). The region spanning 244-326 (GFNKPQTVPQ…QTWLKKVYNE (83 aa)) is the SWIB/MDM2 domain.

The sequence is that of Putative SWIB domain-containing protein R508 from Acanthamoeba polyphaga mimivirus (APMV).